The following is a 118-amino-acid chain: Large ribosomal subunit protein bL20 (118 aa).

Belongs to the bacterial ribosomal protein bL20 family.

In terms of biological role, binds directly to 23S ribosomal RNA and is necessary for the in vitro assembly process of the 50S ribosomal subunit. It is not involved in the protein synthesizing functions of that subunit. The protein is Large ribosomal subunit protein bL20 of Kosmotoga olearia (strain ATCC BAA-1733 / DSM 21960 / TBF 19.5.1).